A 273-amino-acid chain; its full sequence is uncharacterized protein (273 aa).

The helical transmembrane segment at 7–25 (FFRWAFLIATVYVAYYFLV) threads the bilayer. Disordered regions lie at residues 34 to 154 (KPQK…LKMK) and 168 to 273 (LHNS…DSLW). Positions 36-54 (QKSKLTKLGKQKQRQKQKN) are enriched in basic residues. The span at 55–91 (TKKDTLVNRETPSKKSQKLETSDALKSKSKDSSKKEP) shows a compositional bias: basic and acidic residues. Residues 92-101 (VVVPKKGTPK) show a composition bias toward low complexity. Residues 115 to 144 (PKKEKLVGKNPAEKEDTTDVEDTQKLEQKH) are compositionally biased toward basic and acidic residues. The span at 145-154 (STTPSSLKMK) shows a compositional bias: polar residues. Residues 201-212 (KRQRQNQQKKLR) show a composition bias toward basic residues. The segment covering 213-240 (AKEMQELADEEQRRRLAAHRKELHEANR) has biased composition (basic and acidic residues). Over residues 245 to 266 (LNNSSRSAYSYINNGQAGSSKG) the composition is skewed to polar residues.

The protein localises to the cytoplasm. It localises to the membrane. This is an uncharacterized protein from Schizosaccharomyces pombe (strain 972 / ATCC 24843) (Fission yeast).